Here is a 189-residue protein sequence, read N- to C-terminus: Elongation factor P (189 aa).

This sequence belongs to the elongation factor P family.

Its subcellular location is the cytoplasm. It participates in protein biosynthesis; polypeptide chain elongation. Functionally, involved in peptide bond synthesis. Stimulates efficient translation and peptide-bond synthesis on native or reconstituted 70S ribosomes in vitro. Probably functions indirectly by altering the affinity of the ribosome for aminoacyl-tRNA, thus increasing their reactivity as acceptors for peptidyl transferase. The sequence is that of Elongation factor P from Campylobacter lari (strain RM2100 / D67 / ATCC BAA-1060).